The sequence spans 553 residues: MFCIQCEQTIQTPAVKGCSFAQGMCGKTSEVSDLQDVLVYTLQGVSFWASKALEFNIINDEINQWAPKAFFSTLTNVNFDPERILELTSQAANYKALLKEQVMSAATLSNTNLADIPAVANFELPNSAEAILAFAPQVAVNRGKDQVHEDVIGLRLLCLYGLKGAAAYMEHARVLEQTNNDIYAEYHEIMAWLGTDPEDLGELLDCSMRIGLMNYKVMEMLDQGETTTFGHPEPTTVNVKPVKGKCILVSGHDLHDLEKILQQTEGKGINVYTNGEMLPAHGYPELKKYPHLVGNYGSAWQNQQKEFANFPGAIVMTSNCLLNPNVGQYADRLFTRSIVGWPGVAHIEGDDFSQVIECALAQDGFQHDEIEHHITVGFSRNALMNAAPAVIDQVKQGNIKHFFLVGGCDGDKAERSYYTDFTAEAPEDTLILTLACGKFRFNKNTFGDINGIPRLLDVGQCNDAYSAIQLALALAKEFDCDINELPLTLVLSWFEQKAIVILLTLFALGVKGIYTGPTAPAFLTPNLIAIIQEKFDMRSIGNVQDDLKAILAA.

[2Fe-2S] cluster contacts are provided by Cys3, Cys6, Cys18, and Cys25. Hybrid [4Fe-2O-2S] cluster is bound by residues His252, Glu276, Cys320, Cys408, Cys436, Cys461, Glu495, and Lys497. Cysteine persulfide is present on Cys408.

The protein belongs to the HCP family. [2Fe-2S] cluster serves as cofactor. The cofactor is hybrid [4Fe-2O-2S] cluster.

It localises to the cytoplasm. It catalyses the reaction A + NH4(+) + H2O = hydroxylamine + AH2 + H(+). Functionally, catalyzes the reduction of hydroxylamine to form NH(3) and H(2)O. The polypeptide is Hydroxylamine reductase (Vibrio parahaemolyticus serotype O3:K6 (strain RIMD 2210633)).